The chain runs to 251 residues: 1-(5-phosphoribosyl)-5-[(5-phosphoribosylamino)methylideneamino] imidazole-4-carboxamide isomerase (251 aa).

The active-site Proton acceptor is Asp-8. Asp-131 functions as the Proton donor in the catalytic mechanism.

Belongs to the HisA/HisF family.

It is found in the cytoplasm. It catalyses the reaction 1-(5-phospho-beta-D-ribosyl)-5-[(5-phospho-beta-D-ribosylamino)methylideneamino]imidazole-4-carboxamide = 5-[(5-phospho-1-deoxy-D-ribulos-1-ylimino)methylamino]-1-(5-phospho-beta-D-ribosyl)imidazole-4-carboxamide. It functions in the pathway amino-acid biosynthesis; L-histidine biosynthesis; L-histidine from 5-phospho-alpha-D-ribose 1-diphosphate: step 4/9. The polypeptide is 1-(5-phosphoribosyl)-5-[(5-phosphoribosylamino)methylideneamino] imidazole-4-carboxamide isomerase (Burkholderia cenocepacia (strain HI2424)).